A 205-amino-acid chain; its full sequence is Methylthioribulose-1-phosphate dehydratase (205 aa).

2 residues coordinate Zn(2+): histidine 94 and histidine 96.

This sequence belongs to the aldolase class II family. MtnB subfamily. It depends on Zn(2+) as a cofactor.

The enzyme catalyses 5-(methylsulfanyl)-D-ribulose 1-phosphate = 5-methylsulfanyl-2,3-dioxopentyl phosphate + H2O. Its pathway is amino-acid biosynthesis; L-methionine biosynthesis via salvage pathway; L-methionine from S-methyl-5-thio-alpha-D-ribose 1-phosphate: step 2/6. Its function is as follows. Catalyzes the dehydration of methylthioribulose-1-phosphate (MTRu-1-P) into 2,3-diketo-5-methylthiopentyl-1-phosphate (DK-MTP-1-P). This chain is Methylthioribulose-1-phosphate dehydratase, found in Pectobacterium atrosepticum (strain SCRI 1043 / ATCC BAA-672) (Erwinia carotovora subsp. atroseptica).